The chain runs to 374 residues: Succinyl-diaminopimelate desuccinylase (374 aa).

His-66 is a Zn(2+) binding site. Asp-68 is an active-site residue. Asp-99 serves as a coordination point for Zn(2+). Glu-133 acts as the Proton acceptor in catalysis. Zn(2+)-binding residues include Glu-134, Glu-162, and His-348.

Belongs to the peptidase M20A family. DapE subfamily. As to quaternary structure, homodimer. Zn(2+) serves as cofactor. Co(2+) is required as a cofactor.

The enzyme catalyses N-succinyl-(2S,6S)-2,6-diaminopimelate + H2O = (2S,6S)-2,6-diaminopimelate + succinate. Its pathway is amino-acid biosynthesis; L-lysine biosynthesis via DAP pathway; LL-2,6-diaminopimelate from (S)-tetrahydrodipicolinate (succinylase route): step 3/3. Its function is as follows. Catalyzes the hydrolysis of N-succinyl-L,L-diaminopimelic acid (SDAP), forming succinate and LL-2,6-diaminopimelate (DAP), an intermediate involved in the bacterial biosynthesis of lysine and meso-diaminopimelic acid, an essential component of bacterial cell walls. This Coxiella burnetii (strain RSA 331 / Henzerling II) protein is Succinyl-diaminopimelate desuccinylase.